The chain runs to 617 residues: Putative metal ion transporter C17A12.14 (617 aa).

The segment at Met-1–Pro-141 is disordered. A Phosphoserine modification is found at Ser-105. Residues Ser-117–Arg-136 show a composition bias toward basic and acidic residues. A phosphoserine mark is found at Ser-152, Ser-162, Ser-226, and Ser-241. 2 consecutive transmembrane segments (helical) span residues Thr-560–Val-580 and Leu-590–Leu-610.

The protein belongs to the CorA metal ion transporter (MIT) (TC 1.A.35) family. In terms of assembly, interacts with sad1.

It localises to the membrane. The chain is Putative metal ion transporter C17A12.14 from Schizosaccharomyces pombe (strain 972 / ATCC 24843) (Fission yeast).